The following is a 72-amino-acid chain: UPF0352 protein Shal_2512 (72 aa).

The protein belongs to the UPF0352 family.

The sequence is that of UPF0352 protein Shal_2512 from Shewanella halifaxensis (strain HAW-EB4).